Here is a 373-residue protein sequence, read N- to C-terminus: Queuine tRNA-ribosyltransferase (373 aa).

The Proton acceptor role is filled by D94. Substrate contacts are provided by residues 94 to 98 (DSGGF), D148, Q191, and G218. An RNA binding region spans residues 249–255 (GVGTPDY). Residue D268 is the Nucleophile of the active site. Positions 273-277 (TRIGR) are RNA binding; important for wobble base 34 recognition. Residues C306, C308, C311, and H337 each coordinate Zn(2+).

Belongs to the queuine tRNA-ribosyltransferase family. As to quaternary structure, homodimer. Within each dimer, one monomer is responsible for RNA recognition and catalysis, while the other monomer binds to the replacement base PreQ1. Zn(2+) is required as a cofactor.

It catalyses the reaction 7-aminomethyl-7-carbaguanine + guanosine(34) in tRNA = 7-aminomethyl-7-carbaguanosine(34) in tRNA + guanine. The protein operates within tRNA modification; tRNA-queuosine biosynthesis. Its function is as follows. Catalyzes the base-exchange of a guanine (G) residue with the queuine precursor 7-aminomethyl-7-deazaguanine (PreQ1) at position 34 (anticodon wobble position) in tRNAs with GU(N) anticodons (tRNA-Asp, -Asn, -His and -Tyr). Catalysis occurs through a double-displacement mechanism. The nucleophile active site attacks the C1' of nucleotide 34 to detach the guanine base from the RNA, forming a covalent enzyme-RNA intermediate. The proton acceptor active site deprotonates the incoming PreQ1, allowing a nucleophilic attack on the C1' of the ribose to form the product. After dissociation, two additional enzymatic reactions on the tRNA convert PreQ1 to queuine (Q), resulting in the hypermodified nucleoside queuosine (7-(((4,5-cis-dihydroxy-2-cyclopenten-1-yl)amino)methyl)-7-deazaguanosine). This is Queuine tRNA-ribosyltransferase from Ruminiclostridium cellulolyticum (strain ATCC 35319 / DSM 5812 / JCM 6584 / H10) (Clostridium cellulolyticum).